The sequence spans 836 residues: Spliceosome associated factor 3, U4/U6 recycling protein (836 aa).

HAT repeat units follow at residues 127 to 163 (EDFK…YEMS), 296 to 329 (KLPQ…FERD), 331 to 367 (RPNE…LLRR), 418 to 451 (KNMD…LERQ), and 453 to 486 (GDKE…FERE). A disordered region spans residues 507-585 (RAIRPQKKVS…APGSFAVQKA (79 aa)). Basic and acidic residues predominate over residues 540-550 (IVKKVKGDDGG). The span at 558-579 (SNAKSSSAVSSSNASSTPAPGS) shows a compositional bias: low complexity. RRM domains lie at 593 to 668 (RTIF…ANDP) and 683 to 760 (SKVF…LSNP). Disordered stretches follow at residues 757–786 (LSNP…PRKG) and 811–830 (AMDV…DQFR). Positions 816–827 (EGTSTSQPLSND) are enriched in polar residues.

Forms a complex composed of sart-3, terminal uridylyltransferase usip-1 and U6 snRNA; complex formation is mediated by usip-1 and sart-3 binding to U6 snRNA. Associates with U4 and U6 snRNP complexes, probably by interacting with U4 and U6 snRNAs. In terms of tissue distribution, ubiquitously expressed.

Its subcellular location is the nucleus. The protein localises to the nucleoplasm. Functionally, U6 snRNP-binding protein that functions as a recycling factor of the splicing machinery. Promotes the initial reassembly of U4 and U6 snRNPs following their ejection from the spliceosome during its maturation. In Caenorhabditis elegans, this protein is Spliceosome associated factor 3, U4/U6 recycling protein.